Consider the following 459-residue polypeptide: Argininosuccinate lyase (459 aa).

The protein belongs to the lyase 1 family. Argininosuccinate lyase subfamily.

It is found in the cytoplasm. It carries out the reaction 2-(N(omega)-L-arginino)succinate = fumarate + L-arginine. Its pathway is amino-acid biosynthesis; L-arginine biosynthesis; L-arginine from L-ornithine and carbamoyl phosphate: step 3/3. The protein is Argininosuccinate lyase of Photorhabdus laumondii subsp. laumondii (strain DSM 15139 / CIP 105565 / TT01) (Photorhabdus luminescens subsp. laumondii).